The sequence spans 213 residues: Ribosomal RNA small subunit methyltransferase G (213 aa).

S-adenosyl-L-methionine is bound by residues Gly55, 105–106 (AE), and Arg124.

It belongs to the methyltransferase superfamily. RNA methyltransferase RsmG family.

The protein localises to the cytoplasm. In terms of biological role, specifically methylates the N7 position of a guanine in 16S rRNA. The polypeptide is Ribosomal RNA small subunit methyltransferase G (Fervidobacterium nodosum (strain ATCC 35602 / DSM 5306 / Rt17-B1)).